Reading from the N-terminus, the 291-residue chain is 4-hydroxy-tetrahydrodipicolinate synthase (291 aa).

Threonine 47 contacts pyruvate. Residue tyrosine 134 is the Proton donor/acceptor of the active site. The active-site Schiff-base intermediate with substrate is the lysine 162. Isoleucine 205 is a pyruvate binding site.

It belongs to the DapA family. Homotetramer; dimer of dimers.

It is found in the cytoplasm. It carries out the reaction L-aspartate 4-semialdehyde + pyruvate = (2S,4S)-4-hydroxy-2,3,4,5-tetrahydrodipicolinate + H2O + H(+). It participates in amino-acid biosynthesis; L-lysine biosynthesis via DAP pathway; (S)-tetrahydrodipicolinate from L-aspartate: step 3/4. Functionally, catalyzes the condensation of (S)-aspartate-beta-semialdehyde [(S)-ASA] and pyruvate to 4-hydroxy-tetrahydrodipicolinate (HTPA). The polypeptide is 4-hydroxy-tetrahydrodipicolinate synthase (Methanospirillum hungatei JF-1 (strain ATCC 27890 / DSM 864 / NBRC 100397 / JF-1)).